Here is a 337-residue protein sequence, read N- to C-terminus: uncharacterized protein (337 aa).

The 172-residue stretch at 3–174 (IAVRGGHNFK…IGKLIAEAIN (172 aa)) folds into the MurNAc-LAA domain.

To C.perfringens pIP404 ORF10.

This is an uncharacterized protein from Clostridium perfringens (strain 13 / Type A).